Consider the following 217-residue polypeptide: Thiamine-phosphate synthase (217 aa).

4-amino-2-methyl-5-(diphosphooxymethyl)pyrimidine is bound by residues 37 to 41 (QFREK) and Asn-72. Positions 73 and 92 each coordinate Mg(2+). A 4-amino-2-methyl-5-(diphosphooxymethyl)pyrimidine-binding site is contributed by Ser-110. 2-[(2R,5Z)-2-carboxy-4-methylthiazol-5(2H)-ylidene]ethyl phosphate is bound at residue 136-138 (TVS). Lys-139 serves as a coordination point for 4-amino-2-methyl-5-(diphosphooxymethyl)pyrimidine. 2-[(2R,5Z)-2-carboxy-4-methylthiazol-5(2H)-ylidene]ethyl phosphate is bound by residues Gly-168 and 188 to 189 (IS).

This sequence belongs to the thiamine-phosphate synthase family. Requires Mg(2+) as cofactor.

It catalyses the reaction 2-[(2R,5Z)-2-carboxy-4-methylthiazol-5(2H)-ylidene]ethyl phosphate + 4-amino-2-methyl-5-(diphosphooxymethyl)pyrimidine + 2 H(+) = thiamine phosphate + CO2 + diphosphate. The enzyme catalyses 2-(2-carboxy-4-methylthiazol-5-yl)ethyl phosphate + 4-amino-2-methyl-5-(diphosphooxymethyl)pyrimidine + 2 H(+) = thiamine phosphate + CO2 + diphosphate. The catalysed reaction is 4-methyl-5-(2-phosphooxyethyl)-thiazole + 4-amino-2-methyl-5-(diphosphooxymethyl)pyrimidine + H(+) = thiamine phosphate + diphosphate. Its pathway is cofactor biosynthesis; thiamine diphosphate biosynthesis; thiamine phosphate from 4-amino-2-methyl-5-diphosphomethylpyrimidine and 4-methyl-5-(2-phosphoethyl)-thiazole: step 1/1. Functionally, condenses 4-methyl-5-(beta-hydroxyethyl)thiazole monophosphate (THZ-P) and 2-methyl-4-amino-5-hydroxymethyl pyrimidine pyrophosphate (HMP-PP) to form thiamine monophosphate (TMP). The polypeptide is Thiamine-phosphate synthase (Anoxybacillus flavithermus (strain DSM 21510 / WK1)).